The chain runs to 190 residues: uncharacterized protein (190 aa).

Positions 1 to 185 (MITMFKIVRG…LALETIGLGD (185 aa)) constitute a Macro domain.

This is an uncharacterized protein from Pyrococcus horikoshii (strain ATCC 700860 / DSM 12428 / JCM 9974 / NBRC 100139 / OT-3).